The sequence spans 192 residues: Cytidylate kinase (192 aa).

7 to 15 contacts ATP; sequence GPAGSGKST.

The protein belongs to the cytidylate kinase family. Type 2 subfamily.

It localises to the cytoplasm. It carries out the reaction CMP + ATP = CDP + ADP. The catalysed reaction is dCMP + ATP = dCDP + ADP. The polypeptide is Cytidylate kinase (Haloarcula marismortui (strain ATCC 43049 / DSM 3752 / JCM 8966 / VKM B-1809) (Halobacterium marismortui)).